A 301-amino-acid polypeptide reads, in one-letter code: MRVTSPEIQRGIKVSELLDMFGSTAFNARRLGEAAKICEEMVKSDSFVFLTLAGAMIPAGMRKIVAGMMQNGFISSLVTTGANIVHEIVESLGIGHEIGSCYVDDTALAEESINRIYDVFVGQEAFERVEEFLSGIIEGLDGIYTTYEFLWEVGKRIPDERSFLRIAAEREIPVFCPTLHDSIAGLHMTIYRKNLQIDFFRDVSRIIDFCFQKRKMGVIVVGGGVPKNFTLQAMLLAEGFDYAVQITTDSPQWGGLSGATLEEAKSWCKLKPDAKAVTVYCDATIALPMLYAYLLDRCGES.

The active-site Nucleophile is the Lys269.

This sequence belongs to the deoxyhypusine synthase family. It depends on NAD(+) as a cofactor.

It catalyses the reaction [eIF5A protein]-L-lysine + spermidine = [eIF5A protein]-deoxyhypusine + propane-1,3-diamine. The protein operates within protein modification; eIF5A hypusination. Functionally, catalyzes the NAD-dependent oxidative cleavage of spermidine and the subsequent transfer of the butylamine moiety of spermidine to the epsilon-amino group of a specific lysine residue of the eIF-5A precursor protein to form the intermediate deoxyhypusine residue. The polypeptide is Probable deoxyhypusine synthase 1 (dys1) (Archaeoglobus fulgidus (strain ATCC 49558 / DSM 4304 / JCM 9628 / NBRC 100126 / VC-16)).